A 66-amino-acid chain; its full sequence is Photosystem II reaction center protein J (66 aa).

The chain crosses the membrane as a helical span at residues 36 to 56 (LWLVATAGGIAVIFVLGIFFY).

Belongs to the PsbJ family. In terms of assembly, PSII is composed of 1 copy each of membrane proteins PsbA, PsbB, PsbC, PsbD, PsbE, PsbF, PsbH, PsbI, PsbJ, PsbK, PsbL, PsbM, PsbT, PsbX, PsbY, Psb30/Ycf12, peripheral proteins PsbO, CyanoQ (PsbQ), PsbU, PsbV and a large number of cofactors. It forms dimeric complexes.

Its subcellular location is the cellular thylakoid membrane. Its function is as follows. One of the components of the core complex of photosystem II (PSII). PSII is a light-driven water:plastoquinone oxidoreductase that uses light energy to abstract electrons from H(2)O, generating O(2) and a proton gradient subsequently used for ATP formation. It consists of a core antenna complex that captures photons, and an electron transfer chain that converts photonic excitation into a charge separation. In Prochlorococcus marinus (strain MIT 9215), this protein is Photosystem II reaction center protein J.